The following is a 73-amino-acid chain: MKPSTNRMLTRIKSVYMFIQEKGLVTTQELVDEFGITPRTIQRDLNVLAYNDLVHSPSRGKWETTRKKVKITS.

An HTH deoR-type domain is found at 8–63 (MLTRIKSVYMFIQEKGLVTTQELVDEFGITPRTIQRDLNVLAYNDLVHSPSRGKWE). The segment at residues 25–44 (VTTQELVDEFGITPRTIQRD) is a DNA-binding region (H-T-H motif).

This is an uncharacterized protein from Bacillus subtilis (strain 168).